A 25-amino-acid polypeptide reads, in one-letter code: Ribosome-inactivating protein charantin (25 aa).

In terms of assembly, monomer.

The enzyme catalyses Endohydrolysis of the N-glycosidic bond at one specific adenosine on the 28S rRNA.. Functionally, inhibits cell-free translation in a rabbit reticulocyte lysate system. In Momordica charantia (Bitter gourd), this protein is Ribosome-inactivating protein charantin.